A 188-amino-acid chain; its full sequence is Methionine aminopeptidase (188 aa).

His60 contributes to the substrate binding site. Positions 80, 91, and 164 each coordinate a divalent metal cation. His172 provides a ligand contact to substrate.

Belongs to the peptidase M24A family. Methionine aminopeptidase archaeal type 2 subfamily. In terms of assembly, monomer. It depends on Co(2+) as a cofactor. Zn(2+) serves as cofactor. The cofactor is Mn(2+). Fe(2+) is required as a cofactor.

The catalysed reaction is Release of N-terminal amino acids, preferentially methionine, from peptides and arylamides.. Removes the N-terminal methionine from nascent proteins. The N-terminal methionine is often cleaved when the second residue in the primary sequence is small and uncharged (Met-Ala-, Cys, Gly, Pro, Ser, Thr, or Val). The polypeptide is Methionine aminopeptidase (map) (Methanothermus fervidus).